The primary structure comprises 331 residues: Pantothenate kinase (331 aa).

Position 109-116 (109-116 (GSVAVGKS)) interacts with ATP.

The protein belongs to the prokaryotic pantothenate kinase family.

It is found in the cytoplasm. It carries out the reaction (R)-pantothenate + ATP = (R)-4'-phosphopantothenate + ADP + H(+). It functions in the pathway cofactor biosynthesis; coenzyme A biosynthesis; CoA from (R)-pantothenate: step 1/5. The chain is Pantothenate kinase from Rhizobium meliloti (strain 1021) (Ensifer meliloti).